A 236-amino-acid chain; its full sequence is Baculoviral IAP repeat-containing protein 8 (236 aa).

The stretch at 7 to 70 (RLITFGTWMY…KWYPGCKYLL (64 aa)) is one BIR repeat. Zn(2+) contacts are provided by Cys39, Cys42, His59, and Cys66. Residues 189 to 224 (CKICMDRHIAVVFIPCGHLVTCKQCAEAVDRCPMCS) form an RING-type zinc finger.

Belongs to the IAP family. Binds to caspase-9. As to expression, testis specific in normal tissues.

Its subcellular location is the cytoplasm. Its function is as follows. Protects against apoptosis mediated by BAX. This is Baculoviral IAP repeat-containing protein 8 (BIRC8) from Homo sapiens (Human).